Reading from the N-terminus, the 447-residue chain is Phosphatidylinositol 4-kinase type 2-alpha (447 aa).

The segment at M1 to E77 is disordered. Residues R48 to E77 are compositionally biased toward basic and acidic residues. The region spanning G92–T421 is the PI3K/PI4K catalytic domain. Residues I98–G104 form a G-loop region. ATP is bound by residues Y99–S105 and K120. Positions E125 to Y127 are important for substrate binding. Residues K133–C146 are important for interaction with membranes. Residues C142, C143, C145, and C146 are each lipidated (S-palmitoyl cysteine). An ATP-binding site is contributed by Q229 to V232. Residues K236 to R244 form an important for interaction with membranes region. The catalytic loop stretch occupies residues R273–N281. The activation loop stretch occupies residues A312–F332. ATP is bound at residue D314. An important for interaction with membranes region spans residues W327–W336.

Belongs to the PI3/PI4-kinase family. Type II PI4K subfamily.

The protein resides in the golgi apparatus. The protein localises to the trans-Golgi network membrane. Its subcellular location is the membrane raft. It localises to the endosome. It is found in the cytoplasmic vesicle. The protein resides in the cell projection. The protein localises to the dendrite. Its subcellular location is the presynaptic cell membrane. It localises to the synapse. It is found in the synaptosome. The protein resides in the mitochondrion. The protein localises to the membrane. Its subcellular location is the cell membrane. It localises to the perikaryon. It is found in the neuron projection. The catalysed reaction is a 1,2-diacyl-sn-glycero-3-phospho-(1D-myo-inositol) + ATP = a 1,2-diacyl-sn-glycero-3-phospho-(1D-myo-inositol 4-phosphate) + ADP + H(+). In terms of biological role, membrane-bound phosphatidylinositol-4 kinase (PI4-kinase) that catalyzes the phosphorylation of phosphatidylinositol (PI) to phosphatidylinositol 4-phosphate (PI4P), a lipid that plays important roles in endocytosis, Golgi function, protein sorting and membrane trafficking. Besides, phosphorylation of phosphatidylinositol (PI) to phosphatidylinositol 4-phosphate (PI4P) is the first committed step in the generation of phosphatidylinositol 4,5-bisphosphate (PIP2), a precursor of the second messenger inositol 1,4,5-trisphosphate (InsP3). The chain is Phosphatidylinositol 4-kinase type 2-alpha (pi4k2a) from Danio rerio (Zebrafish).